A 208-amino-acid chain; its full sequence is Small ribosomal subunit protein uS4 (208 aa).

The S4 RNA-binding domain maps to 99–165; that stretch reads RRLDNVVFQL…PRLKEILSSL (67 aa).

Belongs to the universal ribosomal protein uS4 family. As to quaternary structure, part of the 30S ribosomal subunit. Contacts protein S5. The interaction surface between S4 and S5 is involved in control of translational fidelity.

Its function is as follows. One of the primary rRNA binding proteins, it binds directly to 16S rRNA where it nucleates assembly of the body of the 30S subunit. In terms of biological role, with S5 and S12 plays an important role in translational accuracy. This chain is Small ribosomal subunit protein uS4, found in Desulfitobacterium hafniense (strain DSM 10664 / DCB-2).